Here is a 354-residue protein sequence, read N- to C-terminus: Probable protein phosphatase 2C 27 (354 aa).

Positions 54 to 319 (RSGDWSDIGG…DNLTAVMVSF (266 aa)) constitute a PPM-type phosphatase domain. Residues aspartate 98, glycine 99, aspartate 267, and aspartate 310 each coordinate Mn(2+).

It belongs to the PP2C family. The cofactor is Mg(2+). It depends on Mn(2+) as a cofactor.

The enzyme catalyses O-phospho-L-seryl-[protein] + H2O = L-seryl-[protein] + phosphate. The catalysed reaction is O-phospho-L-threonyl-[protein] + H2O = L-threonyl-[protein] + phosphate. The sequence is that of Probable protein phosphatase 2C 27 from Oryza sativa subsp. japonica (Rice).